We begin with the raw amino-acid sequence, 342 residues long: Holliday junction branch migration complex subunit RuvB (342 aa).

Residues 1 to 179 form a large ATPase domain (RuvB-L) region; sequence MTNILSPEKI…FGIPMRLNFY (179 aa). ATP-binding positions include Ile-18, Arg-19, Gly-60, Lys-63, Thr-64, Thr-65, 126-128, Arg-169, Tyr-179, and Arg-216; that span reads EDF. Thr-64 is a Mg(2+) binding site. Positions 180–250 are small ATPAse domain (RuvB-S); it reads NTEELKKVLN…ISDFGLNRLE (71 aa). The head domain (RuvB-H) stretch occupies residues 253-342; sequence HIGLDSNDYR…HQFNIFNENE (90 aa). 3 residues coordinate DNA: Arg-289, Arg-308, and Arg-313.

The protein belongs to the RuvB family. In terms of assembly, homohexamer. Forms an RuvA(8)-RuvB(12)-Holliday junction (HJ) complex. HJ DNA is sandwiched between 2 RuvA tetramers; dsDNA enters through RuvA and exits via RuvB. An RuvB hexamer assembles on each DNA strand where it exits the tetramer. Each RuvB hexamer is contacted by two RuvA subunits (via domain III) on 2 adjacent RuvB subunits; this complex drives branch migration. In the full resolvosome a probable DNA-RuvA(4)-RuvB(12)-RuvC(2) complex forms which resolves the HJ.

The protein resides in the cytoplasm. The enzyme catalyses ATP + H2O = ADP + phosphate + H(+). Its function is as follows. The RuvA-RuvB-RuvC complex processes Holliday junction (HJ) DNA during genetic recombination and DNA repair, while the RuvA-RuvB complex plays an important role in the rescue of blocked DNA replication forks via replication fork reversal (RFR). RuvA specifically binds to HJ cruciform DNA, conferring on it an open structure. The RuvB hexamer acts as an ATP-dependent pump, pulling dsDNA into and through the RuvAB complex. RuvB forms 2 homohexamers on either side of HJ DNA bound by 1 or 2 RuvA tetramers; 4 subunits per hexamer contact DNA at a time. Coordinated motions by a converter formed by DNA-disengaged RuvB subunits stimulates ATP hydrolysis and nucleotide exchange. Immobilization of the converter enables RuvB to convert the ATP-contained energy into a lever motion, pulling 2 nucleotides of DNA out of the RuvA tetramer per ATP hydrolyzed, thus driving DNA branch migration. The RuvB motors rotate together with the DNA substrate, which together with the progressing nucleotide cycle form the mechanistic basis for DNA recombination by continuous HJ branch migration. Branch migration allows RuvC to scan DNA until it finds its consensus sequence, where it cleaves and resolves cruciform DNA. This chain is Holliday junction branch migration complex subunit RuvB, found in Rickettsia felis (strain ATCC VR-1525 / URRWXCal2) (Rickettsia azadi).